Here is a 365-residue protein sequence, read N- to C-terminus: 3-isopropylmalate dehydrogenase (365 aa).

An NAD(+)-binding site is contributed by 80 to 93 (GPKWADNTGDQRPE). The substrate site is built by R100, R110, R138, and D223. Positions 223, 247, and 251 each coordinate Mg(2+). 280–292 (GSAPDIAGQDVAN) is an NAD(+) binding site. Residues 337-365 (NEEDASTSAFGREVATRAADSVPQNAPTP) form a disordered region.

The protein belongs to the isocitrate and isopropylmalate dehydrogenases family. LeuB type 1 subfamily. In terms of assembly, homodimer. Mg(2+) serves as cofactor. It depends on Mn(2+) as a cofactor.

The protein resides in the cytoplasm. The catalysed reaction is (2R,3S)-3-isopropylmalate + NAD(+) = 4-methyl-2-oxopentanoate + CO2 + NADH. The protein operates within amino-acid biosynthesis; L-leucine biosynthesis; L-leucine from 3-methyl-2-oxobutanoate: step 3/4. Functionally, catalyzes the oxidation of 3-carboxy-2-hydroxy-4-methylpentanoate (3-isopropylmalate) to 3-carboxy-4-methyl-2-oxopentanoate. The product decarboxylates to 4-methyl-2 oxopentanoate. In Salinibacter ruber (strain DSM 13855 / M31), this protein is 3-isopropylmalate dehydrogenase.